The primary structure comprises 286 residues: MNAGPINYKVKLPSGERYTFIKSTLSARNLYTVCEEAHCPNIAECWESGTATFMIMGSNCSRGCRFCAVTHGRMLPLDPMEPEKVYESVKMMNLDYVVITSVDRDDLPDKGSSHFAAVIRRLKDLKIKIEVLIPDFSGVHKFIDKIIDERPDVIAHNIETVRRLTKTVRDPRAGYDQSLNVLRYVKSRSNIITKSSIMLGLGETDDEVIETLHDLHDAGVDIVTIGQYLRPTKKQLEVKEYSPMERFKNLEESAYSIGFSFVASGPLVRTSYRAAEAFVKGGFKND.

[4Fe-4S] cluster is bound by residues C34, C39, C45, C60, C64, C67, and S271. The Radical SAM core domain maps to 46 to 260 (WESGTATFMI…EESAYSIGFS (215 aa)).

The protein belongs to the radical SAM superfamily. Lipoyl synthase family. [4Fe-4S] cluster serves as cofactor.

It localises to the cytoplasm. The catalysed reaction is [[Fe-S] cluster scaffold protein carrying a second [4Fe-4S](2+) cluster] + N(6)-octanoyl-L-lysyl-[protein] + 2 oxidized [2Fe-2S]-[ferredoxin] + 2 S-adenosyl-L-methionine + 4 H(+) = [[Fe-S] cluster scaffold protein] + N(6)-[(R)-dihydrolipoyl]-L-lysyl-[protein] + 4 Fe(3+) + 2 hydrogen sulfide + 2 5'-deoxyadenosine + 2 L-methionine + 2 reduced [2Fe-2S]-[ferredoxin]. The protein operates within protein modification; protein lipoylation via endogenous pathway; protein N(6)-(lipoyl)lysine from octanoyl-[acyl-carrier-protein]: step 2/2. In terms of biological role, catalyzes the radical-mediated insertion of two sulfur atoms into the C-6 and C-8 positions of the octanoyl moiety bound to the lipoyl domains of lipoate-dependent enzymes, thereby converting the octanoylated domains into lipoylated derivatives. In Picrophilus torridus (strain ATCC 700027 / DSM 9790 / JCM 10055 / NBRC 100828 / KAW 2/3), this protein is Lipoyl synthase.